Reading from the N-terminus, the 233-residue chain is Ribonuclease 3 (233 aa).

Positions 4 to 126 (LNKLMERLGH…IVGAIYIDAG (123 aa)) constitute an RNase III domain. Glu-39 is a Mg(2+) binding site. Residue Asp-43 is part of the active site. Mg(2+) contacts are provided by Asp-112 and Glu-115. Glu-115 is an active-site residue. The 70-residue stretch at 153–222 (DAKSLLQEWL…AKRFLELLDD (70 aa)) folds into the DRBM domain.

It belongs to the ribonuclease III family. Homodimer. Mg(2+) is required as a cofactor.

The protein resides in the cytoplasm. It catalyses the reaction Endonucleolytic cleavage to 5'-phosphomonoester.. Digests double-stranded RNA. Involved in the processing of primary rRNA transcript to yield the immediate precursors to the large and small rRNAs (23S and 16S). Processes some mRNAs, and tRNAs when they are encoded in the rRNA operon. Processes pre-crRNA and tracrRNA of type II CRISPR loci if present in the organism. In Coxiella burnetii (strain RSA 331 / Henzerling II), this protein is Ribonuclease 3.